The primary structure comprises 323 residues: o-succinylbenzoate synthase (323 aa).

The active-site Proton donor is the Lys134. Positions 162, 191, and 214 each coordinate Mg(2+). Lys236 (proton acceptor) is an active-site residue.

Belongs to the mandelate racemase/muconate lactonizing enzyme family. MenC type 1 subfamily. A divalent metal cation is required as a cofactor.

It catalyses the reaction (1R,6R)-6-hydroxy-2-succinyl-cyclohexa-2,4-diene-1-carboxylate = 2-succinylbenzoate + H2O. Its pathway is quinol/quinone metabolism; 1,4-dihydroxy-2-naphthoate biosynthesis; 1,4-dihydroxy-2-naphthoate from chorismate: step 4/7. The protein operates within quinol/quinone metabolism; menaquinone biosynthesis. Converts 2-succinyl-6-hydroxy-2,4-cyclohexadiene-1-carboxylate (SHCHC) to 2-succinylbenzoate (OSB). The protein is o-succinylbenzoate synthase of Yersinia pseudotuberculosis serotype O:1b (strain IP 31758).